Reading from the N-terminus, the 559-residue chain is Protein GRAVITROPIC IN THE LIGHT 1 (559 aa).

The segment at 107-127 is disordered; it reads AVNRREEYDTEEEENEEEGEI. Residues 114–127 are compositionally biased toward acidic residues; that stretch reads YDTEEEENEEEGEI.

Its function is as follows. Required for red (R) and far red (FR) light-induced and phytochrome-mediated deregulation of negative gravitropism leading to randomization of hypocotyl growth orientation. In Arabidopsis thaliana (Mouse-ear cress), this protein is Protein GRAVITROPIC IN THE LIGHT 1.